The primary structure comprises 117 residues: Pancreatic progenitor cell differentiation and proliferation factor A (117 aa).

The disordered stretch occupies residues 22–46 (GSTSSNSSCSSSEYTGEVIPHPPGL). Residues 23 to 33 (STSSNSSCSSS) show a composition bias toward low complexity.

It belongs to the PPDPF family. Expressed exclusively in the exocrine cells during pancreas development.

Probable regulator of exocrine pancreas development. In Danio rerio (Zebrafish), this protein is Pancreatic progenitor cell differentiation and proliferation factor A (ppdpfa).